We begin with the raw amino-acid sequence, 335 residues long: Anthranilate phosphoribosyltransferase 2 (335 aa).

5-phospho-alpha-D-ribose 1-diphosphate contacts are provided by residues glycine 70, 73 to 74 (GD), threonine 78, 80 to 83 (NIST), 98 to 106 (KHGNRSASS), and serine 110. Residue glycine 70 participates in anthranilate binding. Serine 82 contacts Mg(2+). Asparagine 101 is a binding site for anthranilate. Arginine 156 is a binding site for anthranilate. 2 residues coordinate Mg(2+): aspartate 215 and glutamate 216.

The protein belongs to the anthranilate phosphoribosyltransferase family. As to quaternary structure, homodimer. It depends on Mg(2+) as a cofactor.

The enzyme catalyses N-(5-phospho-beta-D-ribosyl)anthranilate + diphosphate = 5-phospho-alpha-D-ribose 1-diphosphate + anthranilate. The protein operates within amino-acid biosynthesis; L-tryptophan biosynthesis; L-tryptophan from chorismate: step 2/5. In terms of biological role, catalyzes the transfer of the phosphoribosyl group of 5-phosphorylribose-1-pyrophosphate (PRPP) to anthranilate to yield N-(5'-phosphoribosyl)-anthranilate (PRA). The sequence is that of Anthranilate phosphoribosyltransferase 2 from Streptomyces coelicolor (strain ATCC BAA-471 / A3(2) / M145).